The chain runs to 426 residues: Glutamate-1-semialdehyde 2,1-aminomutase (426 aa).

Residue Lys-265 is modified to N6-(pyridoxal phosphate)lysine.

Belongs to the class-III pyridoxal-phosphate-dependent aminotransferase family. HemL subfamily. In terms of assembly, homodimer. Pyridoxal 5'-phosphate serves as cofactor.

The protein localises to the cytoplasm. It catalyses the reaction (S)-4-amino-5-oxopentanoate = 5-aminolevulinate. It participates in porphyrin-containing compound metabolism; protoporphyrin-IX biosynthesis; 5-aminolevulinate from L-glutamyl-tRNA(Glu): step 2/2. The sequence is that of Glutamate-1-semialdehyde 2,1-aminomutase from Shigella sonnei (strain Ss046).